Reading from the N-terminus, the 258-residue chain is Oxidoreductase fscI (258 aa).

Residues Leu-34, Arg-59, Asp-82, Asn-109, and Lys-141 each coordinate NADP(+). The active-site Proton donor is the Ser-163. Arg-193 serves as a coordination point for NADP(+).

It belongs to the short-chain dehydrogenases/reductases (SDR) family.

Its pathway is secondary metabolite biosynthesis. Functionally, oxidoreductase; part of the fragmented gene cluster that mediates the biosynthesis of fusarochromene, a tryptophan-derived metabolite closely related to a group of mycotoxins including fusarochromanone. Within the pathway, fscI catalyzes the formation of the chromene ring from the prenyl moity added by the prenyltransferase fscG. The first step of the pathway is the epimerization of L-tryptophan to D-tryptophan in the presence of the NRPS-like tryptophan epimerase fscC. D-tryptophan is subsequently hydroxylated by the tryptophan 6-hydroxylase fscE to yield 6-hydroxytryptophan. The pyrrole ring undergoes cleavaged by the tryptophan 2,3-dioxygenase fscD and is finally converted to 4-hydroxykyrunenine by the hydrolase fscH. The NRPS-like oxidoreductase fscA reduces the carboxyl group to primary alcohol and the DMATS-type prenyltransferase fscG performs prenylation, followed by the formation of a chromene ring catalyzed by the oxidoreductase fscI, which leads to desacetylfusarochromene. Epoxidation by fscF and rearrangement reactions of chromene double bonds convert compound desacetylfusarochromene to fusarochromanones. Although specific acetyltransferases were not found near the fsc gene cluster, several predicted enzymes containing the N-acetyltransferase superfamily domain are present in the genome of F.equiseti. These predicted enzymes may have the potential to convert desacetylfusarochromene to fusarochromene. This is Oxidoreductase fscI from Fusarium equiseti (Fusarium scirpi).